Consider the following 641-residue polypeptide: DNA primase (641 aa).

Residues 41 to 65 (CPFHDEKSPSFQVSPSKGFFHCFGC) form a CHC2-type zinc finger. A Toprim domain is found at 262–346 (SRAVVVEGYT…AAETYIAIAP (85 aa)). The Mg(2+) site is built by E268, D317, and D319. Positions 444–478 (RDRGGKGPAPDQRQRGGGPQQQAGPMTATPRGPAL) are disordered.

This sequence belongs to the DnaG primase family. Monomer. Interacts with DnaB. The cofactor is Zn(2+). Mg(2+) is required as a cofactor.

The catalysed reaction is ssDNA + n NTP = ssDNA/pppN(pN)n-1 hybrid + (n-1) diphosphate.. RNA polymerase that catalyzes the synthesis of short RNA molecules used as primers for DNA polymerase during DNA replication. The sequence is that of DNA primase from Streptomyces coelicolor (strain ATCC BAA-471 / A3(2) / M145).